A 540-amino-acid chain; its full sequence is Esterase B1 (540 aa).

A disulfide bond links Cys-68 and Cys-81. Ser-191 (acyl-ester intermediate) is an active-site residue. Active-site charge relay system residues include Glu-324 and His-442. Asn-452 is a glycosylation site (N-linked (GlcNAc...) asparagine).

The protein belongs to the type-B carboxylesterase/lipase family.

It catalyses the reaction a carboxylic ester + H2O = an alcohol + a carboxylate + H(+). Its function is as follows. Overproduction of nonspecific esterases is a common mechanism of resistance to organophosphate insecticides. This chain is Esterase B1 (B1), found in Culex pipiens (House mosquito).